A 233-amino-acid chain; its full sequence is 5'-methylthioadenosine/S-adenosylhomocysteine nucleosidase (233 aa).

The active-site Proton acceptor is the glutamate 12. Residues glycine 78, isoleucine 152, and 173–174 contribute to the substrate site; that span reads ME. Aspartate 197 (proton donor) is an active-site residue.

The protein belongs to the PNP/UDP phosphorylase family. MtnN subfamily. As to quaternary structure, homodimer.

The catalysed reaction is S-adenosyl-L-homocysteine + H2O = S-(5-deoxy-D-ribos-5-yl)-L-homocysteine + adenine. The enzyme catalyses S-methyl-5'-thioadenosine + H2O = 5-(methylsulfanyl)-D-ribose + adenine. It catalyses the reaction 5'-deoxyadenosine + H2O = 5-deoxy-D-ribose + adenine. It functions in the pathway amino-acid biosynthesis; L-methionine biosynthesis via salvage pathway; S-methyl-5-thio-alpha-D-ribose 1-phosphate from S-methyl-5'-thioadenosine (hydrolase route): step 1/2. Its function is as follows. Catalyzes the irreversible cleavage of the glycosidic bond in both 5'-methylthioadenosine (MTA) and S-adenosylhomocysteine (SAH/AdoHcy) to adenine and the corresponding thioribose, 5'-methylthioribose and S-ribosylhomocysteine, respectively. Also cleaves 5'-deoxyadenosine, a toxic by-product of radical S-adenosylmethionine (SAM) enzymes, into 5-deoxyribose and adenine. Thus, is required for in vivo function of the radical SAM enzymes biotin synthase and lipoic acid synthase, that are inhibited by 5'-deoxyadenosine accumulation. The sequence is that of 5'-methylthioadenosine/S-adenosylhomocysteine nucleosidase from Yersinia pestis bv. Antiqua (strain Antiqua).